A 156-amino-acid chain; its full sequence is Ribosomal RNA large subunit methyltransferase H (156 aa).

S-adenosyl-L-methionine is bound by residues L73, G104, and 123 to 128; that span reads LSALTL.

The protein belongs to the RNA methyltransferase RlmH family. As to quaternary structure, homodimer.

The protein resides in the cytoplasm. The catalysed reaction is pseudouridine(1915) in 23S rRNA + S-adenosyl-L-methionine = N(3)-methylpseudouridine(1915) in 23S rRNA + S-adenosyl-L-homocysteine + H(+). Specifically methylates the pseudouridine at position 1915 (m3Psi1915) in 23S rRNA. The polypeptide is Ribosomal RNA large subunit methyltransferase H (Shewanella baltica (strain OS223)).